Here is a 309-residue protein sequence, read N- to C-terminus: Elongation factor Ts (309 aa).

The involved in Mg(2+) ion dislocation from EF-Tu stretch occupies residues 82-85 (TDFV).

It belongs to the EF-Ts family.

The protein resides in the cytoplasm. Functionally, associates with the EF-Tu.GDP complex and induces the exchange of GDP to GTP. It remains bound to the aminoacyl-tRNA.EF-Tu.GTP complex up to the GTP hydrolysis stage on the ribosome. In Rickettsia africae (strain ESF-5), this protein is Elongation factor Ts.